A 306-amino-acid polypeptide reads, in one-letter code: Tyrosine recombinase XerC (306 aa).

The 85-residue stretch at 10–94 (ARCHSYLQQF…AVKQWGEFLL (85 aa)) folds into the Core-binding (CB) domain. A Tyr recombinase domain is found at 115 to 294 (PLPKNIDVDS…DFQHLAKVYD (180 aa)). Active-site residues include Arg154, Lys178, His246, Arg249, and His272. Tyr281 serves as the catalytic O-(3'-phospho-DNA)-tyrosine intermediate.

This sequence belongs to the 'phage' integrase family. XerC subfamily. In terms of assembly, forms a cyclic heterotetrameric complex composed of two molecules of XerC and two molecules of XerD.

It is found in the cytoplasm. Its function is as follows. Site-specific tyrosine recombinase, which acts by catalyzing the cutting and rejoining of the recombining DNA molecules. The XerC-XerD complex is essential to convert dimers of the bacterial chromosome into monomers to permit their segregation at cell division. It also contributes to the segregational stability of plasmids. In Shewanella oneidensis (strain ATCC 700550 / JCM 31522 / CIP 106686 / LMG 19005 / NCIMB 14063 / MR-1), this protein is Tyrosine recombinase XerC.